A 105-amino-acid polypeptide reads, in one-letter code: uncharacterized protein (105 aa).

It is found in the cytoplasm. The protein localises to the nucleus. This is an uncharacterized protein from Schizosaccharomyces pombe (strain 972 / ATCC 24843) (Fission yeast).